Reading from the N-terminus, the 256-residue chain is Trypsin, alkaline C (256 aa).

An N-terminal signal peptide occupies residues 1 to 17 (MRLFLALLALGFAAVAA). The propeptide at 18–24 (VPANPQR) is activation peptide. Residues 25-256 (IVGGSTTTIQ…RYTSWISNNS (232 aa)) enclose the Peptidase S1 domain. Cysteines 55 and 71 form a disulfide. Catalysis depends on charge relay system residues His-70 and Asp-115. 2 disulfides stabilise this stretch: Cys-180-Cys-197 and Cys-209-Cys-233. Catalysis depends on Ser-213, which acts as the Charge relay system.

This sequence belongs to the peptidase S1 family. As to expression, midgut.

The protein localises to the secreted. The protein resides in the extracellular space. The enzyme catalyses Preferential cleavage: Arg-|-Xaa, Lys-|-Xaa.. In Manduca sexta (Tobacco hawkmoth), this protein is Trypsin, alkaline C.